Reading from the N-terminus, the 399-residue chain is Carbamoyl phosphate synthase arginine-specific small chain (399 aa).

Residues 187 to 379 form the Glutamine amidotransferase type-1 domain; it reads DVALVDCGVK…VERMRCYRKL (193 aa). The active-site Nucleophile is Cys-267. Residues His-352 and Glu-354 contribute to the active site.

It belongs to the CarA family. Heterodimer composed of 2 chains; the small (or glutamine) chain promotes the hydrolysis of glutamine to ammonia, which is used by the large (or ammonia) chain to synthesize carbamoyl phosphate.

It localises to the cytoplasm. The enzyme catalyses hydrogencarbonate + L-glutamine + 2 ATP + H2O = carbamoyl phosphate + L-glutamate + 2 ADP + phosphate + 2 H(+). It carries out the reaction L-glutamine + H2O = L-glutamate + NH4(+). The protein operates within amino-acid biosynthesis; L-arginine biosynthesis; carbamoyl phosphate from bicarbonate: step 1/1. Its function is as follows. Small subunit of the arginine-specific carbamoyl phosphate synthase (CPSase). CPSase catalyzes the formation of carbamoyl phosphate from the ammonia moiety of glutamine, carbonate, and phosphate donated by ATP, constituting the first step of 2 biosynthetic pathways, one leading to arginine and/or urea and the other to pyrimidine nucleotides. The small subunit (glutamine amidotransferase) binds and cleaves glutamine to supply the large subunit with the substrate ammonia. In Eremothecium gossypii (strain ATCC 10895 / CBS 109.51 / FGSC 9923 / NRRL Y-1056) (Yeast), this protein is Carbamoyl phosphate synthase arginine-specific small chain (CPA1).